Reading from the N-terminus, the 78-residue chain is Acyl carrier protein (78 aa).

In terms of domain architecture, Carrier spans 2-77 (STIEERVKKI…AAIDFIQANQ (76 aa)). The residue at position 37 (serine 37) is an O-(pantetheine 4'-phosphoryl)serine.

This sequence belongs to the acyl carrier protein (ACP) family. In terms of processing, 4'-phosphopantetheine is transferred from CoA to a specific serine of apo-ACP by AcpS. This modification is essential for activity because fatty acids are bound in thioester linkage to the sulfhydryl of the prosthetic group.

It is found in the cytoplasm. It participates in lipid metabolism; fatty acid biosynthesis. In terms of biological role, carrier of the growing fatty acid chain in fatty acid biosynthesis. This is Acyl carrier protein from Pectobacterium atrosepticum (strain SCRI 1043 / ATCC BAA-672) (Erwinia carotovora subsp. atroseptica).